A 398-amino-acid chain; its full sequence is Acetate kinase (398 aa).

Asn7 lines the Mg(2+) pocket. Residue Lys14 coordinates ATP. A substrate-binding site is contributed by Arg92. The Proton donor/acceptor role is filled by Asp149. Residues 209–213 (HLGNG), 284–286 (DFR), and 332–336 (GVGEN) contribute to the ATP site. Glu385 serves as a coordination point for Mg(2+).

It belongs to the acetokinase family. Homodimer. It depends on Mg(2+) as a cofactor. The cofactor is Mn(2+).

The protein localises to the cytoplasm. The catalysed reaction is acetate + ATP = acetyl phosphate + ADP. Its pathway is metabolic intermediate biosynthesis; acetyl-CoA biosynthesis; acetyl-CoA from acetate: step 1/2. Catalyzes the formation of acetyl phosphate from acetate and ATP. Can also catalyze the reverse reaction. The polypeptide is Acetate kinase (Clostridioides difficile (strain 630) (Peptoclostridium difficile)).